The chain runs to 687 residues: Adhesion G-protein coupled receptor G1 (687 aa).

The first 25 residues, 1 to 25, serve as a signal peptide directing secretion; that stretch reads MTAQSLLQTTLFLLSLLFLVQGAHG. Position 26–33 (26–33) interacts with heparin; it reads RGHREDFR. At 26 to 402 the chain is on the extracellular side; the sequence is RGHREDFRFC…VEVDAVHKHY (377 aa). 2 cysteine pairs are disulfide-bonded: cysteine 35/cysteine 91 and cysteine 121/cysteine 177. N-linked (GlcNAc...) asparagine glycosylation is found at asparagine 39, asparagine 148, and asparagine 171. Residue 190–200 coordinates heparin; it reads LKHPQKASRRP. Residues 224–395 enclose the GAIN-B domain; that stretch reads DTVSFEEDRI…AVLMVSSVEV (172 aa). 4 N-linked (GlcNAc...) asparagine glycosylation sites follow: asparagine 234, asparagine 303, asparagine 324, and asparagine 341. 2 cysteine pairs are disulfide-bonded: cysteine 346–cysteine 377 and cysteine 366–cysteine 379. A GPS region spans residues 346 to 395; sequence CVFWVEDPTLSSPGHWSSAGCETVRRETQTSCFCNHLTYFAVLMVSSVEV. The interval 384-397 is stachel; it reads YFAVLMVSSVEVDA. A helical membrane pass occupies residues 403–423; sequence LSLLSYVGCVVSALACIVTIA. The Cytoplasmic portion of the chain corresponds to 424–442; sequence AYLCSRRKPRDYTIKVHMN. A helical membrane pass occupies residues 443-463; that stretch reads LLLAVFLLDTSFLLSEPVALT. The Extracellular segment spans residues 464 to 470; sequence GSEAGCR. Residues 471–491 traverse the membrane as a helical segment; it reads ASAIFLHFSLLACLSWMGLEG. At 492-512 the chain is on the cytoplasmic side; sequence YNLYRLVVEVFGTYVPGYLLK. The helical transmembrane segment at 513 to 533 threads the bilayer; that stretch reads LSAMGWGFPIFLVTLVALVDV. Residues 534–570 lie on the Extracellular side of the membrane; sequence DNYGPIILAVHRTPEGVIYPSMCWIRDSLVSYITNLG. The chain crosses the membrane as a helical span at residues 571–591; that stretch reads LFSLVFLFNMAMLATMVVQIL. Residues 592 to 603 are Cytoplasmic-facing; that stretch reads RLRPHTQKWSHV. A helical transmembrane segment spans residues 604 to 624; that stretch reads LTLLGLSLVLGLPWALIFFSF. Residues 625–630 are Extracellular-facing; that stretch reads ASGTFQ. A helical membrane pass occupies residues 631-651; it reads LVVLYLFSIITSFQGFLIFIW. Topologically, residues 652 to 687 are cytoplasmic; it reads YWSMRLQARGGPSPLKSNSDSARLPISSGSTSSSRI. The segment at 664–687 is disordered; the sequence is SPLKSNSDSARLPISSGSTSSSRI. Low complexity predominate over residues 678 to 687; sequence SSGSTSSSRI.

It belongs to the G-protein coupled receptor 2 family. LN-TM7 subfamily. In terms of assembly, heterodimer of 2 chains generated by proteolytic processing; the large extracellular N-terminal fragment (ADGRG1 NT) and the membrane-bound C-terminal fragment (ADGRG1-CT) predominantly remain associated and non-covalently linked. ADGRG1 NT self-associates in a trans-trans manner; the homophilic interaction enhances receptor signaling. Interacts with TGM2. Interacts with heparin; leading to the reduction of ADGRG1 shedding. Interacts with COL3A1. Part of a GPCR-tetraspanin complex at least consisting of ADGRG1, CD81, eventually CD9, and GNA11 in which CD81 is enhancing the association of ADGRG1 with GNA11. Autoproteolytically cleaved into 2 fragments; the large extracellular N-terminal fragment (ADGRG1 NT) and the membrane-bound C-terminal fragment (ADGRG1 CT) predominantly remain associated and non-covalently linked. Shedding to yield the secreted ADGRG1 N-terminal fragment seems to involve metalloprotease(s). In terms of processing, ubiquitinated. Undergoes polyubiquitination upon activation.

Its subcellular location is the cell membrane. The protein resides in the secreted. It localises to the membrane raft. With respect to regulation, forms a heterodimer of 2 chains generated by proteolytic processing that remain associated through non-covalent interactions mediated by the GAIN-B domain. In the inactivated receptor, the Stachel sequence (also named stalk) is embedded in the GAIN-B domain, where it adopts a beta-strand conformation. On activation, the Stachel moves into the 7 transmembrane region and adopts a twisted hook-shaped configuration that forms contacts within the receptor, leading to coupling of a G-alpha protein, which activates signaling. The cleaved GAIN-B and N-terminal domains can then dissociate from the rest of the receptor. Functionally, adhesion G-protein coupled receptor (aGPCR) for steroid hormone 17alpha-hydroxypregnenolone (17-OH), which is involved in cell adhesion and cell-cell interactions. Ligand binding causes a conformation change that triggers signaling via guanine nucleotide-binding proteins (G proteins) and modulates the activity of downstream effectors, such as RhoA pathway. ADGRG1 is coupled to G(12) and/or G(13) G proteins (GNA12 and GNA13, respectively) and mediates the activation Rho small GTPases. Acts as a potent suppressor of ferroptosis: binding to 17-OH-binding initiates signaling that down-regulates CD36 and alleviates ferroptosis-induced liver injury. Ligand-binding also induces cell adhesion activity via association with proteins such as collagen III/COL3A1 and TGM2. Mediates cell matrix adhesion in developing neurons and hematopoietic stem cells. Involved in cortical development, specifically in maintenance of the pial basement membrane integrity and in cortical lamination: association with COL3A1 in the developing brain inhibits neuronal migration via activation of the RhoA pathway. Together with TGM2, acts as a regulator of myelination and myelin repair in oligodendrocyte precursor cells. Acts as a hemostatic sensor of shear force: G protein-coupled receptor signaling is activated in response to shear force in platelets, promoting G(13) G protein signaling, and platelet shape change and aggregation in a COL3A1-dependent manner. Acts as an inhibitor of VEGFA production thereby inhibiting angiogenesis through a signaling pathway mediated by PRKCA. Plays a role in the maintenance of hematopoietic stem cells in bone marrow niche. Plays an essential role in testis development. This chain is Adhesion G-protein coupled receptor G1 (ADGRG1), found in Gorilla gorilla gorilla (Western lowland gorilla).